We begin with the raw amino-acid sequence, 195 residues long: Ferredoxin-2, mitochondrial (195 aa).

Residues 1 to 61 (MAAAAAVRAG…RRLRTSIGVC (61 aa)) constitute a mitochondrion transit peptide. Positions 81–182 (NVVYIDRSGR…GMELTLPKVT (102 aa)) constitute a 2Fe-2S ferredoxin-type domain. Residues cysteine 117, cysteine 123, cysteine 126, and cysteine 163 each coordinate [2Fe-2S] cluster.

The protein belongs to the adrenodoxin/putidaredoxin family. Component of the mitochondrial core iron-sulfur cluster (ISC) complex composed of NFS1, LYRM4, NDUFAB1, ISCU, FXN, and FDX2; this complex is a heterohexamer containing two copies of each monomer. Form a heterodimer complex with NFS1. [2Fe-2S] cluster serves as cofactor.

It is found in the mitochondrion. It localises to the mitochondrion matrix. Its function is as follows. Electron donor, of the core iron-sulfur cluster (ISC) assembly complex, that acts to reduce the persulfide into sulfide during [2Fe-2S] clusters assembly on the scaffolding protein ISCU. The core iron-sulfur cluster (ISC) assembly complex is involved in the de novo synthesis of a [2Fe-2S] cluster, the first step of the mitochondrial iron-sulfur protein biogenesis. This process is initiated by the cysteine desulfurase complex (NFS1:LYRM4:NDUFAB1) that produces persulfide which is delivered on the scaffold protein ISCU in a FXN-dependent manner. Then this complex is stabilized by FDX2 which provides reducing equivalents to accomplish the [2Fe-2S] cluster assembly. Finally, the [2Fe-2S] cluster is transferred from ISCU to chaperone proteins, including HSCB, HSPA9 and GLRX5. Essential for coenzyme Q biosynthesis: together with FDXR, transfers the electrons required for the hydroxylation reaction performed by COQ6. The polypeptide is Ferredoxin-2, mitochondrial (Danio rerio (Zebrafish)).